Here is a 418-residue protein sequence, read N- to C-terminus: UDP-N-acetylglucosamine 1-carboxyvinyltransferase (418 aa).

23-24 (KN) contributes to the phosphoenolpyruvate binding site. Residue arginine 92 coordinates UDP-N-acetyl-alpha-D-glucosamine. The active-site Proton donor is cysteine 116. 2-(S-cysteinyl)pyruvic acid O-phosphothioketal is present on cysteine 116. UDP-N-acetyl-alpha-D-glucosamine-binding positions include 121-125 (RPVDL), 161-164 (KVSV), aspartate 306, and isoleucine 328.

It belongs to the EPSP synthase family. MurA subfamily.

The protein localises to the cytoplasm. It catalyses the reaction phosphoenolpyruvate + UDP-N-acetyl-alpha-D-glucosamine = UDP-N-acetyl-3-O-(1-carboxyvinyl)-alpha-D-glucosamine + phosphate. It participates in cell wall biogenesis; peptidoglycan biosynthesis. Its function is as follows. Cell wall formation. Adds enolpyruvyl to UDP-N-acetylglucosamine. In Vibrio parahaemolyticus serotype O3:K6 (strain RIMD 2210633), this protein is UDP-N-acetylglucosamine 1-carboxyvinyltransferase.